A 466-amino-acid chain; its full sequence is 3-isopropylmalate dehydratase large subunit (466 aa).

The [4Fe-4S] cluster site is built by C347, C407, and C410.

It belongs to the aconitase/IPM isomerase family. LeuC type 1 subfamily. Heterodimer of LeuC and LeuD. Requires [4Fe-4S] cluster as cofactor.

It carries out the reaction (2R,3S)-3-isopropylmalate = (2S)-2-isopropylmalate. Its pathway is amino-acid biosynthesis; L-leucine biosynthesis; L-leucine from 3-methyl-2-oxobutanoate: step 2/4. Its function is as follows. Catalyzes the isomerization between 2-isopropylmalate and 3-isopropylmalate, via the formation of 2-isopropylmaleate. In Escherichia coli O9:H4 (strain HS), this protein is 3-isopropylmalate dehydratase large subunit.